The primary structure comprises 241 residues: Uracil-DNA glycosylase (241 aa).

Catalysis depends on D71, which acts as the Proton acceptor.

It belongs to the uracil-DNA glycosylase (UDG) superfamily. UNG family.

It is found in the cytoplasm. It catalyses the reaction Hydrolyzes single-stranded DNA or mismatched double-stranded DNA and polynucleotides, releasing free uracil.. Its function is as follows. Excises uracil residues from the DNA which can arise as a result of misincorporation of dUMP residues by DNA polymerase or due to deamination of cytosine. The polypeptide is Uracil-DNA glycosylase (Xanthomonas euvesicatoria pv. vesicatoria (strain 85-10) (Xanthomonas campestris pv. vesicatoria)).